Consider the following 492-residue polypeptide: Protein nucleotidyltransferase YdiU (492 aa).

Positions 88, 90, 91, 111, 123, 124, 174, and 181 each coordinate ATP. Residue aspartate 250 is the Proton acceptor of the active site. Residues asparagine 251 and aspartate 260 each coordinate Mg(2+). Aspartate 260 lines the ATP pocket.

The protein belongs to the SELO family. Mg(2+) serves as cofactor. The cofactor is Mn(2+).

It carries out the reaction L-seryl-[protein] + ATP = 3-O-(5'-adenylyl)-L-seryl-[protein] + diphosphate. The enzyme catalyses L-threonyl-[protein] + ATP = 3-O-(5'-adenylyl)-L-threonyl-[protein] + diphosphate. It catalyses the reaction L-tyrosyl-[protein] + ATP = O-(5'-adenylyl)-L-tyrosyl-[protein] + diphosphate. The catalysed reaction is L-histidyl-[protein] + UTP = N(tele)-(5'-uridylyl)-L-histidyl-[protein] + diphosphate. It carries out the reaction L-seryl-[protein] + UTP = O-(5'-uridylyl)-L-seryl-[protein] + diphosphate. The enzyme catalyses L-tyrosyl-[protein] + UTP = O-(5'-uridylyl)-L-tyrosyl-[protein] + diphosphate. Functionally, nucleotidyltransferase involved in the post-translational modification of proteins. It can catalyze the addition of adenosine monophosphate (AMP) or uridine monophosphate (UMP) to a protein, resulting in modifications known as AMPylation and UMPylation. This chain is Protein nucleotidyltransferase YdiU, found in Rhodopseudomonas palustris (strain BisB5).